The following is a 325-amino-acid chain: MEMLKVHGSGNDFFILDEDNLEEPLTEEELIQLAQKVCDRDTGLHGGADGVLYVQAGHEGTDGRMRVINADGSEASMCGNGIRTVARYLSEKKNLAEFKIQTMHADLEVKKADKLAEKVPAFDAEISPVSFDAQDLLMHVGKEKLIDDYIPELSKAIKFSAVAVPNPHLIAFVDHETLMGEELGRIASYLNNGNNPIFPDGVNVSFVEILEPGKIFVRTFERGVGFTNACGTAMSASSLMYVLLHSDQIDFEKLITVINPGGMVRTMVHKRENGDYWMSLIGNATEVAKVNISQADAINGNFDNFTWNETGEQAAYEAFIAQLHR.

Positions 11 and 69 each coordinate substrate. C78 acts as the Proton donor in catalysis. Substrate is bound by residues G79–N80, N166, N203, and E221–R222. The Proton acceptor role is filled by C230. Substrate is bound at residue G231–T232.

It belongs to the diaminopimelate epimerase family. In terms of assembly, homodimer.

The protein resides in the cytoplasm. The catalysed reaction is (2S,6S)-2,6-diaminopimelate = meso-2,6-diaminopimelate. It functions in the pathway amino-acid biosynthesis; L-lysine biosynthesis via DAP pathway; DL-2,6-diaminopimelate from LL-2,6-diaminopimelate: step 1/1. Functionally, catalyzes the stereoinversion of LL-2,6-diaminopimelate (L,L-DAP) to meso-diaminopimelate (meso-DAP), a precursor of L-lysine and an essential component of the bacterial peptidoglycan. In Ligilactobacillus salivarius (strain UCC118) (Lactobacillus salivarius), this protein is Diaminopimelate epimerase.